The primary structure comprises 382 residues: Lactaldehyde reductase (382 aa).

NAD(+) is bound by residues aspartate 38, asparagine 70, 97-98 (GS), 139-143 (TTAGT), asparagine 150, lysine 161, and 180-184 (MMDGM). Residues aspartate 195, histidine 199, histidine 262, and histidine 276 each contribute to the Fe cation site.

It belongs to the iron-containing alcohol dehydrogenase family. As to quaternary structure, homodimer. Fe cation serves as cofactor.

The enzyme catalyses (R)-propane-1,2-diol + NAD(+) = (R)-lactaldehyde + NADH + H(+). It carries out the reaction (S)-propane-1,2-diol + NAD(+) = (S)-lactaldehyde + NADH + H(+). Its pathway is carbohydrate degradation; L-fucose degradation. The protein is Lactaldehyde reductase (fucO) of Escherichia coli O157:H7.